Consider the following 349-residue polypeptide: Nicotinate-nucleotide--dimethylbenzimidazole phosphoribosyltransferase (349 aa).

Positions methionine 1–arginine 20 are disordered. The active-site Proton acceptor is glutamate 313.

It belongs to the CobT family.

It carries out the reaction 5,6-dimethylbenzimidazole + nicotinate beta-D-ribonucleotide = alpha-ribazole 5'-phosphate + nicotinate + H(+). It participates in nucleoside biosynthesis; alpha-ribazole biosynthesis; alpha-ribazole from 5,6-dimethylbenzimidazole: step 1/2. Catalyzes the synthesis of alpha-ribazole-5'-phosphate from nicotinate mononucleotide (NAMN) and 5,6-dimethylbenzimidazole (DMB). The protein is Nicotinate-nucleotide--dimethylbenzimidazole phosphoribosyltransferase of Mycolicibacterium paratuberculosis (strain ATCC BAA-968 / K-10) (Mycobacterium paratuberculosis).